A 414-amino-acid chain; its full sequence is Isocitrate dehydrogenase [NADP] cytoplasmic (414 aa).

S2 is modified (N-acetylserine). Y42 bears the Phosphotyrosine mark. NADP(+) is bound at residue 75 to 77; the sequence is TIT. T77 provides a ligand contact to substrate. K81 carries the N6-acetyllysine modification. R82 contributes to the NADP(+) binding site. Substrate is bound by residues 94–100 and R109; that span reads SPNGTIR. K126 is subject to N6-succinyllysine. The substrate site is built by R132 and K212. N6-acetyllysine is present on residues K224, K233, and K243. Position 252 (D252) interacts with Mn(2+). An NADP(+)-binding site is contributed by K260. Positions 275 and 279 each coordinate Mn(2+). An NADP(+)-binding site is contributed by 310-315; the sequence is GTVTRH. Position 321 is an N6-acetyllysine (K321). Residue N328 coordinates NADP(+). A Phosphoserine modification is found at S389. K400 carries the N6-succinyllysine modification.

It belongs to the isocitrate and isopropylmalate dehydrogenases family. As to quaternary structure, homodimer. Mg(2+) serves as cofactor. Mn(2+) is required as a cofactor. Acetylation at Lys-374 dramatically reduces catalytic activity.

The protein resides in the cytoplasm. It is found in the cytosol. The enzyme catalyses D-threo-isocitrate + NADP(+) = 2-oxoglutarate + CO2 + NADPH. In terms of biological role, catalyzes the NADP(+)-dependent oxidative decarboxylation of isocitrate (D-threo-isocitrate) to 2-ketoglutarate (2-oxoglutarate), which is required by other enzymes such as the phytanoyl-CoA dioxygenase. Plays a critical role in the generation of NADPH, an important cofactor in many biosynthesis pathways. May act as a corneal epithelial crystallin and may be involved in maintaining corneal epithelial transparency. This is Isocitrate dehydrogenase [NADP] cytoplasmic (IDH1) from Microtus mexicanus (Mexican vole).